Reading from the N-terminus, the 279-residue chain is Shikimate dehydrogenase (NADP(+)) (279 aa).

Shikimate contacts are provided by residues 21–23 and threonine 68; that span reads SRS. The active-site Proton acceptor is lysine 72. Aspartate 83 serves as a coordination point for NADP(+). Residues asparagine 92 and aspartate 107 each coordinate shikimate. NADP(+) is bound by residues 132 to 136, 156 to 161, and leucine 221; these read GAGGA and NRTVER. Tyrosine 223 contributes to the shikimate binding site. Glycine 244 contributes to the NADP(+) binding site.

It belongs to the shikimate dehydrogenase family. Homodimer.

The enzyme catalyses shikimate + NADP(+) = 3-dehydroshikimate + NADPH + H(+). It functions in the pathway metabolic intermediate biosynthesis; chorismate biosynthesis; chorismate from D-erythrose 4-phosphate and phosphoenolpyruvate: step 4/7. Its function is as follows. Involved in the biosynthesis of the chorismate, which leads to the biosynthesis of aromatic amino acids. Catalyzes the reversible NADPH linked reduction of 3-dehydroshikimate (DHSA) to yield shikimate (SA). This chain is Shikimate dehydrogenase (NADP(+)), found in Nitrobacter winogradskyi (strain ATCC 25391 / DSM 10237 / CIP 104748 / NCIMB 11846 / Nb-255).